The chain runs to 366 residues: S-adenosylmethionine:tRNA ribosyltransferase-isomerase (366 aa).

This sequence belongs to the QueA family. Monomer.

It is found in the cytoplasm. The enzyme catalyses 7-aminomethyl-7-carbaguanosine(34) in tRNA + S-adenosyl-L-methionine = epoxyqueuosine(34) in tRNA + adenine + L-methionine + 2 H(+). The protein operates within tRNA modification; tRNA-queuosine biosynthesis. In terms of biological role, transfers and isomerizes the ribose moiety from AdoMet to the 7-aminomethyl group of 7-deazaguanine (preQ1-tRNA) to give epoxyqueuosine (oQ-tRNA). The chain is S-adenosylmethionine:tRNA ribosyltransferase-isomerase from Agrobacterium fabrum (strain C58 / ATCC 33970) (Agrobacterium tumefaciens (strain C58)).